A 325-amino-acid polypeptide reads, in one-letter code: Lipoyl synthase (325 aa).

The tract at residues Met1–Lys24 is disordered. [4Fe-4S] cluster-binding residues include Cys54, Cys59, Cys65, Cys80, Cys84, Cys87, and Ser293. Residues Trp66–Leu282 enclose the Radical SAM core domain.

It belongs to the radical SAM superfamily. Lipoyl synthase family. The cofactor is [4Fe-4S] cluster.

The protein resides in the cytoplasm. It catalyses the reaction [[Fe-S] cluster scaffold protein carrying a second [4Fe-4S](2+) cluster] + N(6)-octanoyl-L-lysyl-[protein] + 2 oxidized [2Fe-2S]-[ferredoxin] + 2 S-adenosyl-L-methionine + 4 H(+) = [[Fe-S] cluster scaffold protein] + N(6)-[(R)-dihydrolipoyl]-L-lysyl-[protein] + 4 Fe(3+) + 2 hydrogen sulfide + 2 5'-deoxyadenosine + 2 L-methionine + 2 reduced [2Fe-2S]-[ferredoxin]. The protein operates within protein modification; protein lipoylation via endogenous pathway; protein N(6)-(lipoyl)lysine from octanoyl-[acyl-carrier-protein]: step 2/2. Its function is as follows. Catalyzes the radical-mediated insertion of two sulfur atoms into the C-6 and C-8 positions of the octanoyl moiety bound to the lipoyl domains of lipoate-dependent enzymes, thereby converting the octanoylated domains into lipoylated derivatives. This Rhodospirillum centenum (strain ATCC 51521 / SW) protein is Lipoyl synthase.